A 131-amino-acid chain; its full sequence is MSITYTTVGELKVGSYVVIDGEPCRVVEVTKAKTGKHGSAKANVVAIGVFSGAKKTLMAPVDQQVEVPIIEKHIGQIIADMGDKIQVMDLETYETFEIEKPTEDELASKIRPNAELEYWEIMGRRKIVRVK.

Residue K36 is modified to Hypusine.

Belongs to the eIF-5A family.

Its subcellular location is the cytoplasm. Functionally, functions by promoting the formation of the first peptide bond. This is Translation initiation factor 5A (eIF5A) from Saccharolobus islandicus (strain Y.N.15.51 / Yellowstone #2) (Sulfolobus islandicus).